Reading from the N-terminus, the 370-residue chain is Putative glutamate--cysteine ligase 2 (370 aa).

The protein belongs to the glutamate--cysteine ligase type 2 family. YbdK subfamily.

It carries out the reaction L-cysteine + L-glutamate + ATP = gamma-L-glutamyl-L-cysteine + ADP + phosphate + H(+). ATP-dependent carboxylate-amine ligase which exhibits weak glutamate--cysteine ligase activity. This is Putative glutamate--cysteine ligase 2 from Methylibium petroleiphilum (strain ATCC BAA-1232 / LMG 22953 / PM1).